We begin with the raw amino-acid sequence, 88 residues long: MGSLSIWHWLIVLAVVLVLFVGGGKISTLMGDVARGVKSFKKNMADDETMEGSTGSGGHIAPPGPAAGTVQRDASFSGTGRPSGSSTP.

Residues 4-24 traverse the membrane as a helical segment; that stretch reads LSIWHWLIVLAVVLVLFVGGG. Positions 45–88 are disordered; that stretch reads ADDETMEGSTGSGGHIAPPGPAAGTVQRDASFSGTGRPSGSSTP. Residues 75–88 are compositionally biased toward low complexity; the sequence is SFSGTGRPSGSSTP.

It belongs to the TatA/E family. As to quaternary structure, the Tat system comprises two distinct complexes: a TatABC complex, containing multiple copies of TatA, TatB and TatC subunits, and a separate TatA complex, containing only TatA subunits. Substrates initially bind to the TatABC complex, which probably triggers association of the separate TatA complex to form the active translocon.

It localises to the cell inner membrane. Its function is as follows. Part of the twin-arginine translocation (Tat) system that transports large folded proteins containing a characteristic twin-arginine motif in their signal peptide across membranes. TatA could form the protein-conducting channel of the Tat system. In Gluconacetobacter diazotrophicus (strain ATCC 49037 / DSM 5601 / CCUG 37298 / CIP 103539 / LMG 7603 / PAl5), this protein is Sec-independent protein translocase protein TatA.